The primary structure comprises 87 residues: MAGKSSGDRRKPIRKGKDGKNAAPAKSVRVGVIDYKDVATLRKFISERGKIRALRITGVSVQEQRLIARAVKNAREMALLPYAGSGR.

Basic and acidic residues predominate over residues 1 to 20; sequence MAGKSSGDRRKPIRKGKDGK. The disordered stretch occupies residues 1–24; it reads MAGKSSGDRRKPIRKGKDGKNAAP.

This sequence belongs to the bacterial ribosomal protein bS18 family. In terms of assembly, part of the 30S ribosomal subunit. Forms a tight heterodimer with protein bS6.

Binds as a heterodimer with protein bS6 to the central domain of the 16S rRNA, where it helps stabilize the platform of the 30S subunit. The sequence is that of Small ribosomal subunit protein bS18 from Leifsonia xyli subsp. xyli (strain CTCB07).